The following is a 322-amino-acid chain: MPVTVTRTTITTTTTSSSGQGSPTIVGSPRALTQPLGLLRLLQLVSTCVAFSLVASVGAWTGPMGNWSMFTWCFCFSVTLIILIVELCGLQARFPLSWRNFPITFACYAALFCLSASIIYPTTYVQFLSHGRSRDHAIAATFFSCIACVAYATEVAWTRARPGEITGYMATVPGLLKVLETFVACIIFAFISDTYLYQHQPALEWCVAVYAICFILAAIAILLNLGECTNVLPIPFPSFLSGLALLSVLLYATALVLWPLYQFDEKYGGQPRRSRDVSCSRSHAYYVCGWDRRLAVAILTAINLLAYVADLVHSAHLVFVKV.

Residues 1–25 (MPVTVTRTTITTTTTSSSGQGSPTI) form a disordered region. Phosphoserine is present on Ser22. MARVEL domains follow at residues 31-163 (ALTQ…ARPG) and 168-319 (YMAT…HLVF). The next 8 helical transmembrane spans lie at 41-61 (LLQL…GAWT), 70-90 (FTWC…LCGL), 101-121 (FPIT…IIYP), 137-157 (AIAA…EVAW), 171-191 (TVPG…FAFI), 203-223 (LEWC…AILL), 239-259 (FLSG…VLWP), and 294-314 (LAVA…LVHS).

It belongs to the MAL family.

The protein localises to the membrane. In Pongo abelii (Sumatran orangutan), this protein is Myeloid-associated differentiation marker (MYADM).